A 119-amino-acid chain; its full sequence is UPF0102 protein SGR_1878 (119 aa).

The protein belongs to the UPF0102 family.

This chain is UPF0102 protein SGR_1878, found in Streptomyces griseus subsp. griseus (strain JCM 4626 / CBS 651.72 / NBRC 13350 / KCC S-0626 / ISP 5235).